We begin with the raw amino-acid sequence, 207 residues long: Small heat shock protein hspG7 (207 aa).

Residues 30 to 207 form the sHSP domain; it reads KTIIDILPPM…YSNTIKININ (178 aa). Low complexity-rich tracts occupy residues 84–101 and 122–135; these read QQQQ…SSST and STTS…ATTT. Residues 84–149 are disordered; the sequence is QQQQLVIEKS…EDENKTKSSD (66 aa). A compositionally biased stretch (basic and acidic residues) spans 136–149; the sequence is KENKEDENKTKSSD.

Belongs to the small heat shock protein (HSP20) family.

The polypeptide is Small heat shock protein hspG7 (hspG7) (Dictyostelium discoideum (Social amoeba)).